Here is a 72-residue protein sequence, read N- to C-terminus: Gas vesicle protein A (72 aa).

This sequence belongs to the gas vesicle GvpA family. As to quaternary structure, the gas vesicle shell is 2 nm thick and consists of a single layer of this protein. It forms helical ribs nearly perpendicular to the long axis of the vesicle.

The protein resides in the gas vesicle shell. Its function is as follows. Gas vesicles are hollow, gas filled proteinaceous nanostructures found in some microorganisms. During planktonic growth they allow positioning of the organism at a favorable depth for light or nutrient acquisition. GvpA forms the protein shell. The chain is Gas vesicle protein A from Pseudanabaena galeata (strain PCC 6901).